Consider the following 808-residue polypeptide: Phospholipase D alpha 1 (808 aa).

A propeptide spanning residues 1–30 is cleaved from the precursor; sequence MAQISLHGTLHVTIYEVDKLHSGGGPHFFR. One can recognise a C2 domain in the interval 1–125; the sequence is MAQISLHGTL…LDGEEIDRWV (125 aa). Aspartate 186 is a binding site for Ca(2+). A PLD phosphodiesterase 1 domain is found at 326 to 364; the sequence is TMFTHHQKIVVVDSAMPNGDSQRRRIVSFVGGLDLCDGR. Active-site residues include histidine 331, lysine 333, and aspartate 338. Histidine 331 contributes to the a 1,2-diacyl-sn-glycero-3-phosphate binding site. Histidine 370 and histidine 404 together coordinate Ca(2+). Positions 520 and 659 each coordinate a 1,2-diacyl-sn-glycero-3-phosphate. A PLD phosphodiesterase 2 domain is found at 654 to 681; it reads FMIYVHTKMMIVDDEYIIIGSANINQRS. Catalysis depends on residues histidine 659, lysine 661, and aspartate 666. Glutamate 720 serves as a coordination point for Ca(2+).

This sequence belongs to the phospholipase D family. C2-PLD subfamily. Ca(2+) is required as a cofactor. In terms of tissue distribution, expression is higher in radicle than in endosperm.

Its subcellular location is the cytoplasm. It is found in the membrane. The protein resides in the vacuole. It localises to the endoplasmic reticulum. The protein localises to the plastid. Its subcellular location is the cell membrane. It carries out the reaction a 1,2-diacyl-sn-glycero-3-phosphocholine + H2O = a 1,2-diacyl-sn-glycero-3-phosphate + choline + H(+). Hydrolyzes glycerol-phospholipids at the terminal phosphodiesteric bond. Plays an important role in various cellular processes, including phytohormone action, vesicular trafficking, secretion, cytoskeletal arrangement, meiosis, tumor promotion, pathogenesis, membrane deterioration and senescence. This chain is Phospholipase D alpha 1 (PLD1), found in Ricinus communis (Castor bean).